A 38-amino-acid chain; its full sequence is Large ribosomal subunit protein bL36 (38 aa).

It belongs to the bacterial ribosomal protein bL36 family.

The chain is Large ribosomal subunit protein bL36 from Flavobacterium johnsoniae (strain ATCC 17061 / DSM 2064 / JCM 8514 / BCRC 14874 / CCUG 350202 / NBRC 14942 / NCIMB 11054 / UW101) (Cytophaga johnsonae).